The following is an 855-amino-acid chain: Probable inactive ATP-dependent zinc metalloprotease FTSHI 4, chloroplastic (855 aa).

The N-terminal 78 residues, 1 to 78 (MTFYISSSLT…SFESTESSVS (78 aa)), are a transit peptide targeting the chloroplast. Residues 242–262 (VATFVVWSMRLALFVSLYVWI) form a helical membrane-spanning segment. 356–363 (GPPGTGKT) serves as a coordination point for ATP.

The protein belongs to the AAA ATPase family. As to quaternary structure, homooligomer. Interacts with FtsHi2. As to expression, ubiquitous but preferentially expressed in young leaves.

It localises to the plastid. Its subcellular location is the chloroplast thylakoid membrane. Functions in chloroplast biogenesis and chloroplast division. Required for plastid development during embryogenesis. Might be involved in chaperone functions or play a structural role in the thylakoid FtsH complex. The protein is Probable inactive ATP-dependent zinc metalloprotease FTSHI 4, chloroplastic of Arabidopsis thaliana (Mouse-ear cress).